The chain runs to 427 residues: Mitogen-activated protein kinase 8B (427 aa).

Residues 26–321 (YQNLRPIGSG…VDEALQHPYI (296 aa)) enclose the Protein kinase domain. ATP-binding positions include 33–40 (GSGAQGIV) and Lys-55. Asp-151 functions as the Proton acceptor in the catalytic mechanism. Thr-183 carries the post-translational modification Phosphothreonine. Positions 183–185 (TPY) match the TXY motif. Position 185 is a phosphotyrosine (Tyr-185). Positions 372 to 427 (IRGQPSPIGAAVINGSPQPSSSSSINDVSSMSTEPTVASDTDSSLEASAGPLSCCR) are disordered. A compositionally biased stretch (low complexity) spans 387 to 403 (SPQPSSSSSINDVSSMS). The segment covering 404-417 (TEPTVASDTDSSLE) has biased composition (polar residues).

The protein belongs to the protein kinase superfamily. CMGC Ser/Thr protein kinase family. MAP kinase subfamily. The cofactor is Mg(2+). In terms of processing, dually phosphorylated on Thr-183 and Tyr-185, which activates the enzyme. In terms of tissue distribution, expressed at high levels in the ovary and at lower levels in brain, gill, heart, spleen, liver, kidney, muscle, bladder and gut.

The catalysed reaction is L-seryl-[protein] + ATP = O-phospho-L-seryl-[protein] + ADP + H(+). The enzyme catalyses L-threonyl-[protein] + ATP = O-phospho-L-threonyl-[protein] + ADP + H(+). With respect to regulation, activated by threonine and tyrosine phosphorylation. Responds to activation by environmental stress and pro-inflammatory cytokines by phosphorylating a number of transcription factors, primarily components of AP-1 such as c-Jun and ATF2 and thus regulates AP-1 transcriptional activity. May play a role in the regulation of the circadian clock. The protein is Mitogen-activated protein kinase 8B (mapk8b) of Cyprinus carpio (Common carp).